Reading from the N-terminus, the 134-residue chain is UPF0719 transmembrane protein YshE (134 aa).

The next 4 membrane-spanning stretches (helical) occupy residues 10-30 (VEIA…LTVF), 48-68 (AVAM…QHSI), 78-98 (IGWG…FEFL), and 114-134 (AVGF…AAGI).

This sequence belongs to the UPF0719 family.

The protein localises to the cell membrane. This chain is UPF0719 transmembrane protein YshE (yshE), found in Bacillus subtilis (strain 168).